Consider the following 399-residue polypeptide: MSGSALYETFARAPLAFDHGEGTWLVTDKGERYLDFAGGIAVNSLGHSHPHLVAALTEQAAKLWHVSNLYEIPGQSRLGQRLVDATFADKVFFTNSGAEALECAIKTARRYHFVKGHPERFRVITFEGAFHGRTLATIAAGGQYKYLEGFGPKVEGFDQVGFDDIDAAEKAITPETAAILIEPVQGEGGIRPVPTQSLKRLRQLCDQHGLLLIYDEVQCGIGRTGKLFAHEWSGVAPDIMAIAKGIGGGFPMGACLATDEAAVGMTAGVHGTTFGGNPLAMAVGNAVLDVVLEDGFLEDVQRKALLMKQGLAAIADEFPDVVEDIRGTGLMLGLKCAMPNTKVNMALRDQHLLAVPAGDNVIRLLPPLTVTDAEIHEALNRIRAGAKGLADAIAVAAAK.

Pyridoxal 5'-phosphate-binding positions include 97-98 and Phe-130; that span reads GA. Residue Arg-133 coordinates N(2)-acetyl-L-ornithine. Position 215-218 (215-218) interacts with pyridoxal 5'-phosphate; it reads DEVQ. Lys-244 is subject to N6-(pyridoxal phosphate)lysine. Position 272 (Thr-272) interacts with N(2)-acetyl-L-ornithine. A pyridoxal 5'-phosphate-binding site is contributed by Thr-273.

It belongs to the class-III pyridoxal-phosphate-dependent aminotransferase family. ArgD subfamily. In terms of assembly, homodimer. Requires pyridoxal 5'-phosphate as cofactor.

The protein resides in the cytoplasm. The catalysed reaction is N(2)-acetyl-L-ornithine + 2-oxoglutarate = N-acetyl-L-glutamate 5-semialdehyde + L-glutamate. It functions in the pathway amino-acid biosynthesis; L-arginine biosynthesis; N(2)-acetyl-L-ornithine from L-glutamate: step 4/4. The sequence is that of Acetylornithine aminotransferase from Mesorhizobium japonicum (strain LMG 29417 / CECT 9101 / MAFF 303099) (Mesorhizobium loti (strain MAFF 303099)).